The sequence spans 503 residues: Cytochrome P450 11B2, mitochondrial (503 aa).

A mitochondrion-targeting transit peptide spans 1–24 (MALRAKAEVCVAAPWLSLQRARAL). Phenylalanine 381 contributes to the 21-hydroxyprogesterone binding site. A heme-binding site is contributed by cysteine 450.

It belongs to the cytochrome P450 family. Heme serves as cofactor. Expressed sporadically in the zona glomerulosa (zG) of the adrenal cortex (conventional zonation), as well as in aldosterone-producing cell clusters (APCCs) composed of morphological zG cells in contact with the capsule (variegated zonation).

Its subcellular location is the mitochondrion inner membrane. The catalysed reaction is a steroid + 2 reduced [adrenodoxin] + O2 + 2 H(+) = an 11beta-hydroxysteroid + 2 oxidized [adrenodoxin] + H2O. The enzyme catalyses 21-hydroxyprogesterone + 2 reduced [adrenodoxin] + O2 + 2 H(+) = corticosterone + 2 oxidized [adrenodoxin] + H2O. It catalyses the reaction corticosterone + 2 reduced [adrenodoxin] + O2 + 2 H(+) = 18-hydroxycorticosterone + 2 oxidized [adrenodoxin] + H2O. It carries out the reaction 18-hydroxycorticosterone + 2 reduced [adrenodoxin] + O2 + 2 H(+) = aldosterone + 2 oxidized [adrenodoxin] + 2 H2O. The catalysed reaction is 11-deoxycortisol + 2 reduced [adrenodoxin] + O2 + 2 H(+) = cortisol + 2 oxidized [adrenodoxin] + H2O. The enzyme catalyses 21-hydroxyprogesterone + 2 reduced [adrenodoxin] + O2 + 2 H(+) = 18-hydroxy-11-deoxycorticosterone + 2 oxidized [adrenodoxin] + H2O. It catalyses the reaction cortisol + 2 reduced [adrenodoxin] + O2 + 2 H(+) = 18-hydroxycortisol + 2 oxidized [adrenodoxin] + H2O. It carries out the reaction 18-hydroxycortisol + 2 reduced [adrenodoxin] + O2 + 2 H(+) = 18-oxocortisol + 2 oxidized [adrenodoxin] + 2 H2O. It functions in the pathway steroid biosynthesis. In terms of biological role, a cytochrome P450 monooxygenase that catalyzes the biosynthesis of aldosterone, the main mineralocorticoid in the human body responsible for salt and water homeostasis, thus involved in blood pressure regulation, arterial hypertension, and the development of heart failure. Catalyzes three sequential oxidative reactions of 11-deoxycorticosterone (21-hydroxyprogesterone), namely 11-beta hydroxylation, followed by two successive oxidations at C18 yielding 18-hydroxy and then 18-oxo intermediates (that would not leave the enzyme active site during the consecutive hydroxylation reactions), ending with the formation of aldosterone. Can also produce 18-hydroxycortisol and 18-oxocortisol, derived from successive oxidations of cortisol at C18, normally found at very low levels, but significantly increased in primary aldosteronism, the most common form of secondary hypertension. Mechanistically, uses molecular oxygen inserting one oxygen atom into a substrate and reducing the second into a water molecule. Two electrons are provided by NADPH via a two-protein mitochondrial transfer system comprising flavoprotein FDXR (adrenodoxin/ferredoxin reductase) and nonheme iron-sulfur protein FDX1 or FDX2 (adrenodoxin/ferredoxin). Could also be involved in the androgen metabolic pathway. The polypeptide is Cytochrome P450 11B2, mitochondrial (Homo sapiens (Human)).